The primary structure comprises 491 residues: Cytochrome P450 2B3 (491 aa).

Residue C436 participates in heme binding.

The protein belongs to the cytochrome P450 family. The cofactor is heme. As to expression, liver. Not found in the lung, kidney and prostate.

It localises to the endoplasmic reticulum membrane. It is found in the microsome membrane. It catalyses the reaction an organic molecule + reduced [NADPH--hemoprotein reductase] + O2 = an alcohol + oxidized [NADPH--hemoprotein reductase] + H2O + H(+). Functionally, cytochromes P450 are a group of heme-thiolate monooxygenases. In liver microsomes, this enzyme is involved in an NADPH-dependent electron transport pathway. It oxidizes a variety of structurally unrelated compounds, including steroids, fatty acids, and xenobiotics. The polypeptide is Cytochrome P450 2B3 (Cyp2b3) (Rattus norvegicus (Rat)).